Here is a 511-residue protein sequence, read N- to C-terminus: Exodeoxyribonuclease 7 large subunit (511 aa).

This sequence belongs to the XseA family. As to quaternary structure, heterooligomer composed of large and small subunits.

The protein localises to the cytoplasm. The catalysed reaction is Exonucleolytic cleavage in either 5'- to 3'- or 3'- to 5'-direction to yield nucleoside 5'-phosphates.. In terms of biological role, bidirectionally degrades single-stranded DNA into large acid-insoluble oligonucleotides, which are then degraded further into small acid-soluble oligonucleotides. The sequence is that of Exodeoxyribonuclease 7 large subunit from Brucella ovis (strain ATCC 25840 / 63/290 / NCTC 10512).